Reading from the N-terminus, the 297-residue chain is 4-hydroxy-tetrahydrodipicolinate synthase (297 aa).

Residue Thr50 participates in pyruvate binding. The active-site Proton donor/acceptor is Tyr139. Lys167 functions as the Schiff-base intermediate with substrate in the catalytic mechanism. Val209 serves as a coordination point for pyruvate.

This sequence belongs to the DapA family. As to quaternary structure, homotetramer; dimer of dimers.

Its subcellular location is the cytoplasm. It catalyses the reaction L-aspartate 4-semialdehyde + pyruvate = (2S,4S)-4-hydroxy-2,3,4,5-tetrahydrodipicolinate + H2O + H(+). The protein operates within amino-acid biosynthesis; L-lysine biosynthesis via DAP pathway; (S)-tetrahydrodipicolinate from L-aspartate: step 3/4. Its function is as follows. Catalyzes the condensation of (S)-aspartate-beta-semialdehyde [(S)-ASA] and pyruvate to 4-hydroxy-tetrahydrodipicolinate (HTPA). The chain is 4-hydroxy-tetrahydrodipicolinate synthase from Microcystis aeruginosa (strain NIES-843 / IAM M-2473).